We begin with the raw amino-acid sequence, 250 residues long: MSVTMREMLEAGVHFGHQTRFWNPKMAPFIFGHRNKIHIINLEKSLPMFQEAQKFAKQLTANRGTILMVGTKRQARELLAAEAQRAGVPYVDQRWLGGMLTNFKTVKTSIKRLKDMKAQQEAGLESMSKKEQLTFTREIEKLEKDIGGIQDMNALPDAIFIIDVGFHKIAVAEAKKLGIPLIGVVDSNHSPEGIDYVIPGNDDSAKAVALYARGIADAIIEGRANAVNDVVKAAAPEGSDEFVEVEESAA.

This sequence belongs to the universal ribosomal protein uS2 family.

This Paracidovorax citrulli (strain AAC00-1) (Acidovorax citrulli) protein is Small ribosomal subunit protein uS2.